The primary structure comprises 541 residues: Chaperonin GroEL 2 (541 aa).

ATP contacts are provided by residues 29–32 (TLGP), 86–90 (DGTTT), Gly413, 476–478 (NAA), and Asp492.

The protein belongs to the chaperonin (HSP60) family. In terms of assembly, forms a cylinder of 14 subunits composed of two heptameric rings stacked back-to-back. Interacts with the co-chaperonin GroES.

Its subcellular location is the secreted. It is found in the capsule. The protein resides in the cell surface. It localises to the cell wall. It carries out the reaction ATP + H2O + a folded polypeptide = ADP + phosphate + an unfolded polypeptide.. In terms of biological role, together with its co-chaperonin GroES, plays an essential role in assisting protein folding. The GroEL-GroES system forms a nano-cage that allows encapsulation of the non-native substrate proteins and provides a physical environment optimized to promote and accelerate protein folding. This Mycobacterium sp. (strain KMS) protein is Chaperonin GroEL 2.